The chain runs to 428 residues: RF4 protein (428 aa).

N-linked (GlcNAc...) asparagine glycosylation is found at Asn8, Asn205, and Asn344.

In terms of biological role, not known. The polypeptide is RF4 protein (RF4) (Kluyveromyces lactis (strain ATCC 8585 / CBS 2359 / DSM 70799 / NBRC 1267 / NRRL Y-1140 / WM37) (Yeast)).